A 252-amino-acid chain; its full sequence is Phosphoglycolate phosphatase (252 aa).

Aspartate 13 acts as the Nucleophile in catalysis. Mg(2+)-binding residues include aspartate 13, aspartate 15, and aspartate 192.

Belongs to the HAD-like hydrolase superfamily. CbbY/CbbZ/Gph/YieH family. In terms of assembly, monomer. It depends on Mg(2+) as a cofactor. The cofactor is chloride.

The catalysed reaction is 2-phosphoglycolate + H2O = glycolate + phosphate. It functions in the pathway organic acid metabolism; glycolate biosynthesis; glycolate from 2-phosphoglycolate: step 1/1. In terms of biological role, specifically catalyzes the dephosphorylation of 2-phosphoglycolate. Is involved in the dissimilation of the intracellular 2-phosphoglycolate formed during the DNA repair of 3'-phosphoglycolate ends, a major class of DNA lesions induced by oxidative stress. The chain is Phosphoglycolate phosphatase from Salmonella paratyphi A (strain ATCC 9150 / SARB42).